A 456-amino-acid polypeptide reads, in one-letter code: Proline--tRNA ligase (456 aa).

This sequence belongs to the class-II aminoacyl-tRNA synthetase family. ProS type 3 subfamily. As to quaternary structure, homodimer.

It localises to the cytoplasm. The enzyme catalyses tRNA(Pro) + L-proline + ATP = L-prolyl-tRNA(Pro) + AMP + diphosphate. Catalyzes the attachment of proline to tRNA(Pro) in a two-step reaction: proline is first activated by ATP to form Pro-AMP and then transferred to the acceptor end of tRNA(Pro). The polypeptide is Proline--tRNA ligase (Methanococcus aeolicus (strain ATCC BAA-1280 / DSM 17508 / OCM 812 / Nankai-3)).